The chain runs to 557 residues: Suprabasin (557 aa).

An N-terminal signal peptide occupies residues 1 to 23; the sequence is MHLASLLSSCSLLLLLGALPGWA. Disordered stretches follow at residues 150–175, 422–441, 464–490, and 509–533; these read RFGQ…GAHH, GQGA…KVAQ, AAGQ…GKQE, and NQLL…TTLT. A compositionally biased stretch (low complexity) spans 153-175; the sequence is QGAHHATGQAGKEAEKFGQGAHH. The span at 476–487 shows a compositional bias: low complexity; the sequence is GQGVHHAAGQAG.

The protein resides in the secreted. In Bos taurus (Bovine), this protein is Suprabasin (SBSN).